Consider the following 39-residue polypeptide: Photosystem II reaction center protein J (39 aa).

The helical transmembrane segment at 9-29 (LWLVATVGGIAVITVLGIFIY) threads the bilayer.

It belongs to the PsbJ family. PSII is composed of 1 copy each of membrane proteins PsbA, PsbB, PsbC, PsbD, PsbE, PsbF, PsbH, PsbI, PsbJ, PsbK, PsbL, PsbM, PsbT, PsbX, PsbY, PsbZ, Psb30/Ycf12, at least 3 peripheral proteins of the oxygen-evolving complex and a large number of cofactors. It forms dimeric complexes.

The protein localises to the plastid. Its subcellular location is the chloroplast thylakoid membrane. One of the components of the core complex of photosystem II (PSII). PSII is a light-driven water:plastoquinone oxidoreductase that uses light energy to abstract electrons from H(2)O, generating O(2) and a proton gradient subsequently used for ATP formation. It consists of a core antenna complex that captures photons, and an electron transfer chain that converts photonic excitation into a charge separation. The chain is Photosystem II reaction center protein J from Gracilaria tenuistipitata var. liui (Red alga).